A 396-amino-acid polypeptide reads, in one-letter code: MKHSQKYRRYGIYEKTGNPFIKGLQRLLIACLFISGSLSIVVFQICLQVLLPWSKIRFQNGINQSKKAFIVLLCMILNMVAPSSLNVTFETSRPLKNSSNAKPCFRFKDRAIIIANHQMYADWIYLWWLSFVSNLGGNVYIILKKALQYIPLLGFGMRNFKFIFLSRNWQKDEKALTNSLVSMDLNARCKGPLTNYKSCYSKTNESIAAYNLIMFPEGTNLSLKTREKSEAFCQRAHLDHVQLRHLLLPHSKGLKFAVEKLAPSLDAIYDVTIGYSPALRTEYVGTKFTLKKIFLMGVYPEKVDFYIREFRVNEIPLQDDEVFFNWLLGVWKEKDQLLEDYYNTGQFKSNAKNDNQSIVVTTQTTGFQHETLTPRILSYYGFFAFLILVFVMKKNH.

The next 2 helical transmembrane spans lie at 27–47 (LLIA…QICL) and 69–89 (FIVL…NVTF). Residues 117 to 122 (HQMYAD) carry the HXXXXD motif motif. 2 helical membrane-spanning segments follow: residues 123–143 (WIYL…YIIL) and 372–392 (LTPR…VFVM).

Belongs to the 1-acyl-sn-glycerol-3-phosphate acyltransferase family.

The protein localises to the membrane. This is an uncharacterized protein from Saccharomyces cerevisiae (strain ATCC 204508 / S288c) (Baker's yeast).